A 285-amino-acid polypeptide reads, in one-letter code: Ribosomal RNA small subunit methyltransferase H (285 aa).

S-adenosyl-L-methionine-binding positions include 34–36, aspartate 51, phenylalanine 75, aspartate 96, and histidine 103; that span reads AGH. The interval 259-285 is disordered; sequence LVPSEKEAAQNPRARSAKLRAAEKEAP.

Belongs to the methyltransferase superfamily. RsmH family.

The protein resides in the cytoplasm. The enzyme catalyses cytidine(1402) in 16S rRNA + S-adenosyl-L-methionine = N(4)-methylcytidine(1402) in 16S rRNA + S-adenosyl-L-homocysteine + H(+). Specifically methylates the N4 position of cytidine in position 1402 (C1402) of 16S rRNA. This is Ribosomal RNA small subunit methyltransferase H from Thermus thermophilus (strain ATCC 27634 / DSM 579 / HB8).